The chain runs to 251 residues: uncharacterized protein (251 aa).

The protein localises to the mitochondrion. This is an uncharacterized protein from Arabidopsis thaliana (Mouse-ear cress).